The primary structure comprises 282 residues: Pantothenate synthetase (282 aa).

30 to 37 (MGYLHEGH) contacts ATP. Histidine 37 (proton donor) is an active-site residue. Glutamine 61 is a (R)-pantoate binding site. Glutamine 61 is a beta-alanine binding site. 147–150 (GQKD) lines the ATP pocket. Residue glutamine 153 participates in (R)-pantoate binding. Residues valine 176 and 184-187 (MSSR) each bind ATP.

It belongs to the pantothenate synthetase family. As to quaternary structure, homodimer.

It is found in the cytoplasm. The enzyme catalyses (R)-pantoate + beta-alanine + ATP = (R)-pantothenate + AMP + diphosphate + H(+). It participates in cofactor biosynthesis; (R)-pantothenate biosynthesis; (R)-pantothenate from (R)-pantoate and beta-alanine: step 1/1. In terms of biological role, catalyzes the condensation of pantoate with beta-alanine in an ATP-dependent reaction via a pantoyl-adenylate intermediate. This is Pantothenate synthetase from Pelotomaculum thermopropionicum (strain DSM 13744 / JCM 10971 / SI).